Consider the following 651-residue polypeptide: Probable potassium transport system protein Kup (651 aa).

Helical transmembrane passes span 41–61 (LVLGALGVVYGDIGTSPIYAF), 82–102 (VVSLIFWALTLVVTVKYVLFV), 130–150 (LILGVGICGAALFFGDAVITP), 163–183 (IVAPNLTPFVVPATVVILVTL), 194–214 (VAIVFGPIMALWFVALGASGL), 235–255 (FLTVSPAVAFVTVGAVFLAMT), 276–296 (WLWIVFPCLLLNYFGQAAFIL), 309–329 (MIPSFALWPMVLLATAATVIA), 366–386 (IYIPRVNLLLGLAVVILVLGF), 395–415 (AYGIAVTGNMLVTTVLLYIVM), 426–446 (ALPIILGFLVIDMLFFSANII), and 450–470 (EGGWASIGIATVLVLIMWTWV).

This sequence belongs to the HAK/KUP transporter (TC 2.A.72) family.

It is found in the cell inner membrane. It catalyses the reaction K(+)(in) + H(+)(in) = K(+)(out) + H(+)(out). Transport of potassium into the cell. Likely operates as a K(+):H(+) symporter. In Brucella canis (strain ATCC 23365 / NCTC 10854 / RM-666), this protein is Probable potassium transport system protein Kup.